Reading from the N-terminus, the 507-residue chain is Maturase K (507 aa).

This sequence belongs to the intron maturase 2 family. MatK subfamily.

It is found in the plastid. Its subcellular location is the chloroplast. Usually encoded in the trnK tRNA gene intron. Probably assists in splicing its own and other chloroplast group II introns. The polypeptide is Maturase K (Lyonia lucida (Fetterbush)).